A 120-amino-acid chain; its full sequence is MFLLHEYDIFWTFLIIASLIPILVFWISGLLAPVSEGPEKLSSYESGIEPMGGAWLQFRIRYYMFALVFVVFDVETVFLYPWAMSFDVLGVSVFIEAFIFVLILVVGLVYAWRKGALEWS.

A run of 3 helical transmembrane segments spans residues 9 to 29, 64 to 84, and 88 to 108; these read IFWT…WISG, MFAL…PWAM, and VLGV…VVGL.

Belongs to the complex I subunit 3 family. As to quaternary structure, NDH is composed of at least 16 different subunits, 5 of which are encoded in the nucleus.

The protein localises to the plastid. It is found in the chloroplast thylakoid membrane. The catalysed reaction is a plastoquinone + NADH + (n+1) H(+)(in) = a plastoquinol + NAD(+) + n H(+)(out). The enzyme catalyses a plastoquinone + NADPH + (n+1) H(+)(in) = a plastoquinol + NADP(+) + n H(+)(out). Functionally, NDH shuttles electrons from NAD(P)H:plastoquinone, via FMN and iron-sulfur (Fe-S) centers, to quinones in the photosynthetic chain and possibly in a chloroplast respiratory chain. The immediate electron acceptor for the enzyme in this species is believed to be plastoquinone. Couples the redox reaction to proton translocation, and thus conserves the redox energy in a proton gradient. In Zea mays (Maize), this protein is NAD(P)H-quinone oxidoreductase subunit 3, chloroplastic.